Here is a 736-residue protein sequence, read N- to C-terminus: Fidgetin (736 aa).

4 disordered regions span residues 118–155 (GMTPALPPPDVTASVGSSTGVASSLSEPSYSSSNCGNH), 180–248 (TYSG…YSPG), 272–295 (IPGYSYQSHNHAPIAPTPLNGSSA), and 341–438 (STRG…AEEQ). Over residues 128 to 150 (VTASVGSSTGVASSLSEPSYSSS) the composition is skewed to low complexity. Positions 205 to 214 (QPPPPPPPTL) are enriched in pro residues. The segment covering 216-232 (PSYNTSSPNLSSYNYPP) has biased composition (low complexity). The segment covering 352-368 (DTSSLAFKPTKQSMPTD) has biased composition (polar residues). ATP-binding positions include Ala467 and 507–512 (GTGRTL).

Belongs to the AAA ATPase family.

The protein resides in the nucleus matrix. It localises to the cytoplasm. It is found in the cytoskeleton. The protein localises to the microtubule organizing center. Its subcellular location is the centrosome. ATP-dependent microtubule severing protein. Severs microtubules along their length and depolymerizes their ends, primarily the minus-end, suppressing microtubule growth from and attachment to centrosomes. Microtubule severing may promote rapid reorganization of cellular microtubule arrays and the release of microtubules from the centrosome following nucleation. Microtubule release from the mitotic spindle poles may allow depolymerization of the microtubule end proximal to the spindle pole, leading to poleward microtubule flux and poleward motion of chromosome. The polypeptide is Fidgetin (fign) (Danio rerio (Zebrafish)).